A 202-amino-acid polypeptide reads, in one-letter code: Small ribosomal subunit protein uS4 (202 aa).

The region spanning 91–154 (SMLSSVLYNS…VNLPSVLAAI (64 aa)) is the S4 RNA-binding domain.

This sequence belongs to the universal ribosomal protein uS4 family. Part of the 30S ribosomal subunit. Contacts protein S5. The interaction surface between S4 and S5 is involved in control of translational fidelity.

Functionally, one of the primary rRNA binding proteins, it binds directly to 16S rRNA where it nucleates assembly of the body of the 30S subunit. With S5 and S12 plays an important role in translational accuracy. The protein is Small ribosomal subunit protein uS4 of Ehrlichia ruminantium (strain Gardel).